Consider the following 32-residue polypeptide: Cytochrome b6-f complex subunit 7 (32 aa).

Residues 9-27 (AAVFWILIPIGLVGGALLL) form a helical membrane-spanning segment.

Belongs to the PetM family. The 4 large subunits of the cytochrome b6-f complex are cytochrome b6, subunit IV (17 kDa polypeptide, PetD), cytochrome f and the Rieske protein, while the 4 small subunits are PetG, PetL, PetM and PetN. The complex functions as a dimer.

It is found in the cellular thylakoid membrane. Component of the cytochrome b6-f complex, which mediates electron transfer between photosystem II (PSII) and photosystem I (PSI), cyclic electron flow around PSI, and state transitions. In Prochlorococcus marinus (strain MIT 9301), this protein is Cytochrome b6-f complex subunit 7.